The chain runs to 710 residues: Polyribonucleotide nucleotidyltransferase (710 aa).

Residues Asp-491 and Asp-497 each contribute to the Mg(2+) site. The KH domain occupies Pro-559–Ile-618. Residues Gly-628 to Lys-696 enclose the S1 motif domain.

Belongs to the polyribonucleotide nucleotidyltransferase family. Mg(2+) serves as cofactor.

The protein localises to the cytoplasm. The catalysed reaction is RNA(n+1) + phosphate = RNA(n) + a ribonucleoside 5'-diphosphate. Its function is as follows. Involved in mRNA degradation. Catalyzes the phosphorolysis of single-stranded polyribonucleotides processively in the 3'- to 5'-direction. In Herminiimonas arsenicoxydans, this protein is Polyribonucleotide nucleotidyltransferase.